Reading from the N-terminus, the 99-residue chain is HssA/B-like protein 41 (99 aa).

The interval 1–29 is disordered; that stretch reads MTLFSSISSISNPMTSSKSSISSFGSGTS.

It belongs to the hssA/B family.

This is HssA/B-like protein 41 (hssl41) from Dictyostelium discoideum (Social amoeba).